The sequence spans 185 residues: Nucleoside triphosphate pyrophosphatase (185 aa).

Asp-70 (proton acceptor) is an active-site residue.

Belongs to the Maf family. The cofactor is a divalent metal cation.

The protein localises to the cytoplasm. The enzyme catalyses a ribonucleoside 5'-triphosphate + H2O = a ribonucleoside 5'-phosphate + diphosphate + H(+). It carries out the reaction a 2'-deoxyribonucleoside 5'-triphosphate + H2O = a 2'-deoxyribonucleoside 5'-phosphate + diphosphate + H(+). Nucleoside triphosphate pyrophosphatase. May have a dual role in cell division arrest and in preventing the incorporation of modified nucleotides into cellular nucleic acids. The polypeptide is Nucleoside triphosphate pyrophosphatase (Nitratiruptor sp. (strain SB155-2)).